Reading from the N-terminus, the 851-residue chain is Phosphatidate phosphatase LPIN3 (851 aa).

Residues 1–108 (MNYVGQLAET…VPPGLCTSPI (108 aa)) form an N-LIP region. 2 disordered regions span residues 114–385 (SGFP…YLDD) and 400–432 (QSDSGLGARRWSEPSSQKSLRDPNPEHEPEPTL). Residues 140–151 (GRRKRRRRRKPK) show a composition bias toward basic residues. The Nuclear localization signal motif lies at 141–148 (RRKRRRRR). Thr-159 is subject to Phosphothreonine. Residues Ser-161, Ser-162, and Ser-224 each carry the phosphoserine modification. Residues 268–286 (GRAGATSPPRGGPSTPSTS) are compositionally biased toward low complexity. The span at 418–429 (SLRDPNPEHEPE) shows a compositional bias: basic and acidic residues. Residue Ser-463 is modified to Phosphoserine. A compositionally biased stretch (basic and acidic residues) spans 542–559 (SAQKEKTAAKEQQGEKTE). The tract at residues 542–591 (SAQKEKTAAKEQQGEKTEVLSSDDDAPDSPVILEIPSLPPSTPPSTPTYK) is disordered. Residues 578-587 (SLPPSTPPST) are compositionally biased toward pro residues. The C-LIP stretch occupies residues 590 to 792 (YKKSLRLSSD…RIFTVNPRGE (203 aa)). The DXDXT motif signature appears at 644 to 648 (DIDGT). Residues 655–659 (LGHIL) carry the LXXIL motif motif.

Belongs to the lipin family. Mg(2+) is required as a cofactor. Significant expression in intestine and other regions of the gastrointestinal tract.

The protein resides in the nucleus. The enzyme catalyses a 1,2-diacyl-sn-glycero-3-phosphate + H2O = a 1,2-diacyl-sn-glycerol + phosphate. With respect to regulation, inhibited by N-ethylmaleimide. Functionally, magnesium-dependent phosphatidate phosphatase enzyme which catalyzes the conversion of phosphatidic acid to diacylglycerol during triglyceride, phosphatidylcholine and phosphatidylethanolamine biosynthesis therefore regulates fatty acid metabolism. The polypeptide is Phosphatidate phosphatase LPIN3 (Homo sapiens (Human)).